A 123-amino-acid polypeptide reads, in one-letter code: Fluoride-specific ion channel FluC (123 aa).

Helical transmembrane passes span 1–21, 32–52, 64–84, and 99–119; these read MLEI…RYLM, ILSL…GLVI, IGLL…SFSY, and FGYT…GIYL. The Na(+) site is built by Gly-74 and Thr-77.

This sequence belongs to the fluoride channel Fluc/FEX (TC 1.A.43) family.

It is found in the cell inner membrane. It carries out the reaction fluoride(in) = fluoride(out). With respect to regulation, na(+) is not transported, but it plays an essential structural role and its presence is essential for fluoride channel function. Its function is as follows. Fluoride-specific ion channel. Important for reducing fluoride concentration in the cell, thus reducing its toxicity. The chain is Fluoride-specific ion channel FluC from Gloeothece citriformis (strain PCC 7424) (Cyanothece sp. (strain PCC 7424)).